Here is a 306-residue protein sequence, read N- to C-terminus: MELQEYELITVLGPTASGKTAFATRLANELNSEIISADSRQVYRNMTIGTGKDLDNYIIEGKFIPYHLIDICQAGEKYNVFRFQHDFHEIFTKIKKKGKLPILCGGTGLYIESVLKGYKLLDVPENLILRSNLKDKSVDELKKILKSYKNLHNQTDTDSVRKIIRAIEIETCYPTQKNNPINSYSSIKSLIIGVNIDRELRRNRISLRLKKRLEEGMIEEVKNLLETELSPDQLIYYGLEYKYITLYLIGQLSYSEMYQQLEIAIHQYAKRQMTWFRGMERRGFKIHWIDVYEMNHLNEIFNRIHF.

An ATP-binding site is contributed by 13–20 (GPTASGKT). A substrate-binding site is contributed by 15 to 20 (TASGKT). An interaction with substrate tRNA region spans residues 38-41 (DSRQ).

The protein belongs to the IPP transferase family. In terms of assembly, monomer. The cofactor is Mg(2+).

It carries out the reaction adenosine(37) in tRNA + dimethylallyl diphosphate = N(6)-dimethylallyladenosine(37) in tRNA + diphosphate. In terms of biological role, catalyzes the transfer of a dimethylallyl group onto the adenine at position 37 in tRNAs that read codons beginning with uridine, leading to the formation of N6-(dimethylallyl)adenosine (i(6)A). This Azobacteroides pseudotrichonymphae genomovar. CFP2 protein is tRNA dimethylallyltransferase 1.